We begin with the raw amino-acid sequence, 525 residues long: Mannuronan C5-epimerase AlgG (525 aa).

Positions 1-29 (MNVQRKLASTQLKPVLLGVLLATSAWSQA) are cleaved as a signal peptide. PbH1 repeat units lie at residues 287–309 (ADDV…DPHD), 311–334 (SERL…IVSR), 336–358 (VNNS…VLDR), 360–382 (SEHN…TLYE), and 383–405 (SSNN…RMRN). His308 functions as the Proton acceptor in the catalytic mechanism.

It belongs to the D-mannuronate C5-epimerase family.

It localises to the periplasm. The catalysed reaction is [(1-&gt;4)-beta-D-mannuronosyl](n) = [alginate](n). The protein operates within glycan biosynthesis; alginate biosynthesis. Inhibited by zinc. Functionally, catalyzes the epimerization of beta-D-mannuronate to alpha-L-guluronate during the synthesis of the linear polysaccharide alginate. In addition, is part of a periplasmic protein complex that protects alginate from degradation by AlgL by channeling the newly formed alginate polymer through a scaffold that transfers the alginate polymer through the periplasmic space to the outer membrane secretin AlgE. The protein is Mannuronan C5-epimerase AlgG of Azotobacter vinelandii.